A 100-amino-acid polypeptide reads, in one-letter code: Urease subunit gamma 2 (100 aa).

Belongs to the urease gamma subunit family. In terms of assembly, heterotrimer of UreA (gamma), UreB (beta) and UreC (alpha) subunits. Three heterotrimers associate to form the active enzyme.

It is found in the cytoplasm. It catalyses the reaction urea + 2 H2O + H(+) = hydrogencarbonate + 2 NH4(+). The protein operates within nitrogen metabolism; urea degradation; CO(2) and NH(3) from urea (urease route): step 1/1. Disrupting the ure2 operon has no effect on urease activity or pathogen survival in BALB/c mice when administered orally. In Brucella abortus (strain 2308), this protein is Urease subunit gamma 2.